We begin with the raw amino-acid sequence, 249 residues long: Pyridoxine 5'-phosphate synthase (249 aa).

N7 is a binding site for 3-amino-2-oxopropyl phosphate. 9–10 (DH) serves as a coordination point for 1-deoxy-D-xylulose 5-phosphate. Residue R18 participates in 3-amino-2-oxopropyl phosphate binding. H43 (proton acceptor) is an active-site residue. 1-deoxy-D-xylulose 5-phosphate is bound by residues R45 and H50. The active-site Proton acceptor is E70. Residue T100 participates in 1-deoxy-D-xylulose 5-phosphate binding. Catalysis depends on H198, which acts as the Proton donor. Residues A199 and 220–221 (GH) each bind 3-amino-2-oxopropyl phosphate.

This sequence belongs to the PNP synthase family. In terms of assembly, homooctamer; tetramer of dimers.

It is found in the cytoplasm. The enzyme catalyses 3-amino-2-oxopropyl phosphate + 1-deoxy-D-xylulose 5-phosphate = pyridoxine 5'-phosphate + phosphate + 2 H2O + H(+). Its pathway is cofactor biosynthesis; pyridoxine 5'-phosphate biosynthesis; pyridoxine 5'-phosphate from D-erythrose 4-phosphate: step 5/5. Catalyzes the complicated ring closure reaction between the two acyclic compounds 1-deoxy-D-xylulose-5-phosphate (DXP) and 3-amino-2-oxopropyl phosphate (1-amino-acetone-3-phosphate or AAP) to form pyridoxine 5'-phosphate (PNP) and inorganic phosphate. This Azoarcus sp. (strain BH72) protein is Pyridoxine 5'-phosphate synthase.